Here is a 448-residue protein sequence, read N- to C-terminus: Probable tryptophanase (448 aa).

An N6-(pyridoxal phosphate)lysine modification is found at Lys-253.

The protein belongs to the beta-eliminating lyase family. The cofactor is pyridoxal 5'-phosphate.

The enzyme catalyses L-tryptophan + H2O = indole + pyruvate + NH4(+). The protein operates within amino-acid degradation; L-tryptophan degradation via pyruvate pathway; indole and pyruvate from L-tryptophan: step 1/1. The protein is Probable tryptophanase of Halobacterium salinarum (strain ATCC 29341 / DSM 671 / R1).